A 343-amino-acid chain; its full sequence is Histone H1.8 (343 aa).

Residues 1–32 (MAPGSIASSDTSSSTSSSSTSSASSASAEGSS) are compositionally biased toward low complexity. 2 disordered regions span residues 1-50 (MAPG…VRAP) and 122-343 (ATGS…EAEG). One can recognise an H15 domain in the interval 52–130 (RHPPVLRMVL…GATGSFKLVP (79 aa)). Residues 132-142 (DKRKIPPRKTA) are compositionally biased toward basic residues. 3 stretches are compositionally biased toward basic and acidic residues: residues 150–183 (EGKD…ERAA), 199–219 (QTKD…RPDK), and 235–247 (KVKE…ADTK). Positions 161 to 176 (KKDPANTVEVKKGSRK) match the Nuclear localization signal motif. The segment covering 253–265 (QPGSQSSKSTVTK) has biased composition (polar residues).

The protein belongs to the histone H1/H5 family. As to expression, oocyte (at protein level).

The protein localises to the cytoplasm. It is found in the nucleus. The protein resides in the chromosome. May play a key role in the control of gene expression during oogenesis and early embryogenesis, presumably through the perturbation of chromatin structure. Essential for meiotic maturation of germinal vesicle-stage oocytes. The somatic type linker histone H1c is rapidly replaced by H1oo in a donor nucleus transplanted into an oocyte. The greater mobility of H1oo as compared to H1c may contribute to this rapid replacement and increased instability of the embryonic chromatin structure. The rapid replacement of H1c with H1oo may play an important role in nuclear remodeling. This is Histone H1.8 from Bos taurus (Bovine).